Consider the following 1041-residue polypeptide: Protein SMAX1-like (1041 aa).

The Clp R domain maps to 8–188; it reads IQQTLTPEAA…KSIIEQSLSA (181 aa). Repeat stretches follow at residues 12–98 and 117–188; these read LTPE…LDRL and VSNA…SLSA. Positions 189–205 are enriched in low complexity; it reads PSPCPSAAASTTTAGPG. Disordered regions lie at residues 189–214, 482–513, and 889–913; these read PSPC…PSPL, EAEQ…QNKA, and EGSH…VKRS. Over residues 482-495 the composition is skewed to basic and acidic residues; that stretch reads EAEQTDKPASRPEA. Positions 891–900 are enriched in polar residues; it reads SHNSSDVSVE.

Belongs to the ClpA/ClpB family.

In terms of biological role, may act downstream of MAX2 to negatively regulate karrikins/strigolactone responses. Acts probably specifically in the karrikin pathway. May function in a transcriptional corepressor complex. The protein is Protein SMAX1-like of Oryza sativa subsp. japonica (Rice).